Consider the following 55-residue polypeptide: Bowman-Birk type proteinase inhibitor B1 (55 aa).

4 cysteine pairs are disulfide-bonded: cysteine 6–cysteine 53, cysteine 12–cysteine 17, cysteine 26–cysteine 33, and cysteine 30–cysteine 45.

The protein belongs to the Bowman-Birk serine protease inhibitor family. As to expression, expressed in bulb (at protein level).

In terms of biological role, serine protease inhibitor. Weakly inhibits trypsin (Ki = 167 nM). Does not inhibit bacterial subtilisin or mamallian chymotrypsin. This chain is Bowman-Birk type proteinase inhibitor B1, found in Hyacinthus orientalis (Common hyacinth).